A 390-amino-acid polypeptide reads, in one-letter code: uncharacterized protein (390 aa).

This is an uncharacterized protein from Orgyia pseudotsugata multicapsid polyhedrosis virus (OpMNPV).